The primary structure comprises 181 residues: ECF RNA polymerase sigma factor EcfG (181 aa).

Positions 15–77 (VPSLRAFAIS…FRSDYRKRRR (63 aa)) are sigma-70 factor domain-2. The segment at 103 to 155 (EEFRAALDKLPQDQREALILVGASGFSYEDAAAICGCAVGTIKSRVNRARSKL) is sigma-70 factor domain-4.

It belongs to the sigma-70 factor family. ECF subfamily.

Functionally, sigma factors are initiation factors that promote the attachment of RNA polymerase to specific initiation sites and are then released. Regulates expression of hpnP under a variety of stresses, including high temperature, pH stress, and presence of nonionic osmolytes. The sequence is that of ECF RNA polymerase sigma factor EcfG from Rhodopseudomonas palustris (strain TIE-1).